A 318-amino-acid chain; its full sequence is Pyrimidine-specific ribonucleoside hydrolase RihA (318 aa).

Residue His240 is part of the active site.

The protein belongs to the IUNH family. RihA subfamily.

In terms of biological role, hydrolyzes cytidine or uridine to ribose and cytosine or uracil, respectively. This chain is Pyrimidine-specific ribonucleoside hydrolase RihA, found in Shewanella sp. (strain MR-4).